The following is a 367-amino-acid chain: Dimethyladenosine transferase 1, mitochondrial (367 aa).

The N-terminal 16 residues, 1-16 (MASASRLPPLPALRDF), are a transit peptide targeting the mitochondrion. S-adenosyl-L-methionine contacts are provided by residues 30 to 33 (QNYL), Asn-31, Leu-33, Gly-58, Glu-80, Asp-106, and Asn-141.

This sequence belongs to the class I-like SAM-binding methyltransferase superfamily. rRNA adenine N(6)-methyltransferase family. KsgA subfamily.

The protein localises to the mitochondrion. Probable S-adenosyl-L-methionine-dependent methyltransferase which specifically dimethylates mitochondrial 12S rRNA at the conserved stem loop. Also required for basal transcription of mitochondrial DNA. Stimulates transcription independently of the methyltransferase activity. The protein is Dimethyladenosine transferase 1, mitochondrial (tfbm-1) of Caenorhabditis elegans.